Reading from the N-terminus, the 294-residue chain is tRNA-uridine aminocarboxypropyltransferase 1 (294 aa).

A disordered region spans residues 158–185 (DMQNDSSCEPSLKRPKCSQQYDKSKNEG). Residues 202-205 (DSTW) carry the DXTW motif.

This sequence belongs to the TDD superfamily. DTWD1 family.

Its subcellular location is the nucleus. It catalyses the reaction a uridine in tRNA + S-adenosyl-L-methionine = a 3-[(3S)-3-amino-3-carboxypropyl]uridine in tRNA + S-methyl-5'-thioadenosine + H(+). Catalyzes the formation of 3-(3-amino-3-carboxypropyl)uridine (acp3U) at position 20 in the D-loop of several cytoplasmic tRNAs (acp3U(20)). This chain is tRNA-uridine aminocarboxypropyltransferase 1, found in Xenopus tropicalis (Western clawed frog).